A 353-amino-acid polypeptide reads, in one-letter code: DNA-repair protein XRCC1 (353 aa).

Residues 1–12 show a composition bias toward polar residues; the sequence is MSQKRNLPSWMS. Positions 1 to 57 are disordered; that stretch reads MSQKRNLPSWMSSRDPEITPSKSHCKKPKDEGPTEEHNSRNAPSNKSEHAEPSSNTT. Positions 28-39 are enriched in basic and acidic residues; sequence PKDEGPTEEHNS. A BRCT 1 domain is found at 58–146; that stretch reads EFSKLMEGVV…KLVDIEQYLM (89 aa). Residues 150–194 are disordered; it reads KPWRKSSSPQDANREKREHLSKKPEKQVEKKTETRGTPSTSSKNR. Basic and acidic residues predominate over residues 161–183; sequence ANREKREHLSKKPEKQVEKKTET. Residues 184 to 194 show a composition bias toward polar residues; it reads RGTPSTSSKNR. Positions 240–260 form a coiled coil; that stretch reads AAEGVLTCLQDAIDSLEQKQD. The 82-residue stretch at 266–347 folds into the BRCT 2 domain; sequence ELWSFVPRVV…EEEIELAYRN (82 aa).

As to quaternary structure, homodimer. Interacts with polynucleotide kinase (PNK), DNA polymerase-beta (POLB) and DNA ligase III (LIG3). Interacts with ZDP and ROS1. Binds to various forms of double-stranded DNA (e.g. methylated, unmethylated, with single-nucleotide gap flanked by 3'-phosphate or 5'-phosphate ends).

It localises to the nucleus. Corrects defective DNA strand-break repair and sister chromatid exchange following treatment with ionizing radiation and alkylating agents. Involved in DNA demethylation pathway by stimulating cytosine methylation (5-meC) excision, gap tailoring, and DNA ligation. This Arabidopsis thaliana (Mouse-ear cress) protein is DNA-repair protein XRCC1.